Consider the following 101-residue polypeptide: Integration host factor subunit beta (101 aa).

It belongs to the bacterial histone-like protein family. In terms of assembly, heterodimer of an alpha and a beta chain.

This protein is one of the two subunits of integration host factor, a specific DNA-binding protein that functions in genetic recombination as well as in transcriptional and translational control. The sequence is that of Integration host factor subunit beta from Janthinobacterium sp. (strain Marseille) (Minibacterium massiliensis).